A 450-amino-acid polypeptide reads, in one-letter code: Phosphoglucosamine mutase (450 aa).

Ser101 (phosphoserine intermediate) is an active-site residue. Mg(2+)-binding residues include Ser101, Asp240, Asp242, and Asp244. Ser101 is subject to Phosphoserine.

Belongs to the phosphohexose mutase family. It depends on Mg(2+) as a cofactor. Activated by phosphorylation.

The enzyme catalyses alpha-D-glucosamine 1-phosphate = D-glucosamine 6-phosphate. Functionally, catalyzes the conversion of glucosamine-6-phosphate to glucosamine-1-phosphate. The polypeptide is Phosphoglucosamine mutase (Streptococcus pneumoniae (strain Hungary19A-6)).